Consider the following 365-residue polypeptide: 4-hydroxy-3-methylbut-2-en-1-yl diphosphate synthase (flavodoxin) (365 aa).

C270, C273, C305, and E312 together coordinate [4Fe-4S] cluster.

Belongs to the IspG family. The cofactor is [4Fe-4S] cluster.

It carries out the reaction (2E)-4-hydroxy-3-methylbut-2-enyl diphosphate + 2 oxidized [2Fe-2S]-[ferredoxin] + H2O = 2-C-methyl-D-erythritol 2,4-cyclic diphosphate + 2 reduced [2Fe-2S]-[ferredoxin] + H(+). It catalyses the reaction (2E)-4-hydroxy-3-methylbut-2-enyl diphosphate + oxidized [flavodoxin] + H2O + 2 H(+) = 2-C-methyl-D-erythritol 2,4-cyclic diphosphate + reduced [flavodoxin]. It participates in isoprenoid biosynthesis; isopentenyl diphosphate biosynthesis via DXP pathway; isopentenyl diphosphate from 1-deoxy-D-xylulose 5-phosphate: step 5/6. Its function is as follows. Converts 2C-methyl-D-erythritol 2,4-cyclodiphosphate (ME-2,4cPP) into 1-hydroxy-2-methyl-2-(E)-butenyl 4-diphosphate. Involved in density-dependent regulation of 2'-N-acetyltransferase. This Providencia stuartii protein is 4-hydroxy-3-methylbut-2-en-1-yl diphosphate synthase (flavodoxin).